A 777-amino-acid chain; its full sequence is Penicillin-binding protein 1B (777 aa).

Residues 1-30 (MTRKSSNRSRGRKARSGKSASSSKLQIWLG) are Cytoplasmic-facing. The chain crosses the membrane as a helical; Signal-anchor for type II membrane protein span at residues 31–52 (RIWSIGWKLALTLAAVLVFIGI). At 53-777 (YLDSMIKQRF…TEWIKKLFEW (725 aa)) the chain is on the periplasmic side. The tract at residues 162–334 (LRLEPKLMGM…SYYNPMRYAE (173 aa)) is transglycosylase. E200 functions as the Proton donor; for transglycosylase activity in the catalytic mechanism. Residues 415–709 (SKLEQAIHDQ…ASGALRVYAQ (295 aa)) form a transpeptidase region. The active-site Acyl-ester intermediate; for transpeptidase activity is S476.

In the N-terminal section; belongs to the glycosyltransferase 51 family. This sequence in the C-terminal section; belongs to the transpeptidase family.

It is found in the cell inner membrane. The enzyme catalyses [GlcNAc-(1-&gt;4)-Mur2Ac(oyl-L-Ala-gamma-D-Glu-L-Lys-D-Ala-D-Ala)](n)-di-trans,octa-cis-undecaprenyl diphosphate + beta-D-GlcNAc-(1-&gt;4)-Mur2Ac(oyl-L-Ala-gamma-D-Glu-L-Lys-D-Ala-D-Ala)-di-trans,octa-cis-undecaprenyl diphosphate = [GlcNAc-(1-&gt;4)-Mur2Ac(oyl-L-Ala-gamma-D-Glu-L-Lys-D-Ala-D-Ala)](n+1)-di-trans,octa-cis-undecaprenyl diphosphate + di-trans,octa-cis-undecaprenyl diphosphate + H(+). It catalyses the reaction Preferential cleavage: (Ac)2-L-Lys-D-Ala-|-D-Ala. Also transpeptidation of peptidyl-alanyl moieties that are N-acyl substituents of D-alanine.. It participates in cell wall biogenesis; peptidoglycan biosynthesis. Functionally, cell wall formation. Synthesis of cross-linked peptidoglycan from the lipid intermediates. The enzyme has a penicillin-insensitive transglycosylase N-terminal domain (formation of linear glycan strands) and a penicillin-sensitive transpeptidase C-terminal domain (cross-linking of the peptide subunits). This chain is Penicillin-binding protein 1B (mrcB), found in Vibrio cholerae serotype O1 (strain ATCC 39315 / El Tor Inaba N16961).